A 376-amino-acid chain; its full sequence is Endoplasmic reticulum-Golgi intermediate compartment protein 2 (376 aa).

Residues 1 to 33 lie on the Cytoplasmic side of the membrane; the sequence is MRRLNKKKALNFVRELDAFPKVPESYVETTASG. The helical transmembrane segment at 34–54 threads the bilayer; the sequence is GTVSLLAFTAMALLAFFEFFV. The Lumenal portion of the chain corresponds to 55–318; that stretch reads YRDTWMKYEY…PFWQFLVRLC (264 aa). Residues 319–339 form a helical membrane-spanning segment; it reads GIIGGIFSTTGMLHNLVGFCV. Over 340-376 the chain is Cytoplasmic; sequence DVVCCRFKLGVYKPKSMSDFDGQINSLTPLLSENAEQ.

It belongs to the ERGIC family.

The protein resides in the endoplasmic reticulum-Golgi intermediate compartment membrane. It is found in the golgi apparatus. Its subcellular location is the cis-Golgi network membrane. It localises to the endoplasmic reticulum membrane. Its function is as follows. Possible role in transport between endoplasmic reticulum and Golgi. This is Endoplasmic reticulum-Golgi intermediate compartment protein 2 (ergic2) from Danio rerio (Zebrafish).